We begin with the raw amino-acid sequence, 172 residues long: Large ribosomal subunit protein uL10 (172 aa).

The protein belongs to the universal ribosomal protein uL10 family. In terms of assembly, part of the ribosomal stalk of the 50S ribosomal subunit. The N-terminus interacts with L11 and the large rRNA to form the base of the stalk. The C-terminus forms an elongated spine to which L12 dimers bind in a sequential fashion forming a multimeric L10(L12)X complex.

Its function is as follows. Forms part of the ribosomal stalk, playing a central role in the interaction of the ribosome with GTP-bound translation factors. The sequence is that of Large ribosomal subunit protein uL10 from Rhodopseudomonas palustris (strain HaA2).